A 222-amino-acid polypeptide reads, in one-letter code: Flagellar L-ring protein (222 aa).

A signal peptide spans 1–18 (MRRPGAAALAAAALALAG). Cys19 is lipidated: N-palmitoyl cysteine. Cys19 carries the S-diacylglycerol cysteine lipid modification.

Belongs to the FlgH family. The basal body constitutes a major portion of the flagellar organelle and consists of four rings (L,P,S, and M) mounted on a central rod.

Its subcellular location is the cell outer membrane. It is found in the bacterial flagellum basal body. Functionally, assembles around the rod to form the L-ring and probably protects the motor/basal body from shearing forces during rotation. The protein is Flagellar L-ring protein of Burkholderia mallei (strain ATCC 23344).